A 310-amino-acid chain; its full sequence is Protein FIP2 (310 aa).

The disordered stretch occupies residues 1–58 (MGFAPVTPAAVETYDPDVDHDDESNGLDGFRVRSKRSGKFSGGYSDSPREVGDGYGVR). The span at 14–25 (YDPDVDHDDESN) shows a compositional bias: acidic residues. Ser77 and Ser105 each carry phosphoserine. Disordered stretches follow at residues 115-135 (ATRL…GSGG), 152-171 (FKPK…LDYD), and 177-221 (DRAE…GSSS). Over residues 208-221 (PRNTGASNGYGSSS) the composition is skewed to polar residues.

Interacts with FRI. Interacts with WAV3.

The polypeptide is Protein FIP2 (Arabidopsis thaliana (Mouse-ear cress)).